The following is a 297-amino-acid chain: Bifunctional protein FolD (297 aa).

Residues 168 to 170 (GRS), Thr-197, and Val-238 each bind NADP(+).

The protein belongs to the tetrahydrofolate dehydrogenase/cyclohydrolase family. Homodimer.

It catalyses the reaction (6R)-5,10-methylene-5,6,7,8-tetrahydrofolate + NADP(+) = (6R)-5,10-methenyltetrahydrofolate + NADPH. It carries out the reaction (6R)-5,10-methenyltetrahydrofolate + H2O = (6R)-10-formyltetrahydrofolate + H(+). It participates in one-carbon metabolism; tetrahydrofolate interconversion. Catalyzes the oxidation of 5,10-methylenetetrahydrofolate to 5,10-methenyltetrahydrofolate and then the hydrolysis of 5,10-methenyltetrahydrofolate to 10-formyltetrahydrofolate. The polypeptide is Bifunctional protein FolD (Lawsonia intracellularis (strain PHE/MN1-00)).